Reading from the N-terminus, the 95-residue chain is CRISPR-associated endoribonuclease Cas2 (95 aa).

Residue Asp-10 participates in Mg(2+) binding.

The protein belongs to the CRISPR-associated endoribonuclease Cas2 protein family. As to quaternary structure, homodimer, forms a heterotetramer with a Cas1 homodimer. The cofactor is Mg(2+).

Functionally, CRISPR (clustered regularly interspaced short palindromic repeat), is an adaptive immune system that provides protection against mobile genetic elements (viruses, transposable elements and conjugative plasmids). CRISPR clusters contain sequences complementary to antecedent mobile elements and target invading nucleic acids. CRISPR clusters are transcribed and processed into CRISPR RNA (crRNA). Functions as a ssRNA-specific endoribonuclease. Involved in the integration of spacer DNA into the CRISPR cassette. The polypeptide is CRISPR-associated endoribonuclease Cas2 (Geobacter sulfurreducens (strain ATCC 51573 / DSM 12127 / PCA)).